An 81-amino-acid chain; its full sequence is UPF0298 protein SAK_1599 (81 aa).

The protein belongs to the UPF0298 family.

It localises to the cytoplasm. The sequence is that of UPF0298 protein SAK_1599 from Streptococcus agalactiae serotype Ia (strain ATCC 27591 / A909 / CDC SS700).